The following is a 151-amino-acid chain: Class I hydrophobin A (151 aa).

The N-terminal stretch at 1-17 (MQFSVAAVLALATAVAA) is a signal peptide. Disulfide bonds link Cys-52-Cys-125, Cys-60-Cys-119, Cys-61-Cys-101, and Cys-126-Cys-144.

It belongs to the fungal hydrophobin family. In terms of assembly, interacts with cutinase cutL1 in a pH-dependent manner. Self-assembles to form functional amyloid fibrils called rodlets. Self-assembly into fibrillar rodlets occurs spontaneously at hydrophobic:hydrophilic interfaces and the rodlets further associate laterally to form amphipathic monolayers. rolA rodlet formation is regulated by the strength of ionic interactions between rolA molecules. Three types of self-assembled structures of rolA are observed: spherical, rod-like, and mesh-like.

Its subcellular location is the secreted. The protein localises to the cell wall. In terms of biological role, aerial growth, conidiation, and dispersal of filamentous fungi in the environment rely upon a capability of their secreting small amphipathic proteins called hydrophobins (HPBs) with low sequence identity. Class I can self-assemble into an outermost layer of rodlet bundles on aerial cell surfaces, conferring cellular hydrophobicity that supports fungal growth, development and dispersal; whereas Class II form highly ordered films at water-air interfaces through intermolecular interactions but contribute nothing to the rodlet structure. RolA is a class I hydrophobin that undergoes a conformational change after its adsorption to hydrophobic surfaces such as the biodegradable polyester polybutylene succinate-coadipate (PBSA) and recruits the cutinase cutL1, resulting in condensation of cutL1 on the PBSA surface and consequent stimulation of PBSA hydrolysis. Increases also the activity of polyethylene terephthalate hydrolase (PETase) that hydrolyzes polyethylene terephthalate (PET), one of the most well-known polyesters that is widely used as packaging material, when the PET samples are preincubated with the hydrophobin. The wetting effect of rolA probably acts on PET surface to become hydrophilic, which leads PETase easier to contact and attack the surface. The protein is Class I hydrophobin A of Aspergillus oryzae (strain ATCC 42149 / RIB 40) (Yellow koji mold).